The following is a 710-amino-acid chain: Prolyl endopeptidase (710 aa).

N-acetylmethionine is present on Met-1. N6-acetyllysine is present on Lys-157. Active-site charge relay system residues include Ser-554, Asp-641, and His-680.

This sequence belongs to the peptidase S9A family. Monomer. In terms of processing, the N-terminus is blocked.

The protein resides in the cytoplasm. The enzyme catalyses Hydrolysis of Pro-|-Xaa &gt;&gt; Ala-|-Xaa in oligopeptides.. Cleaves peptide bonds on the C-terminal side of prolyl residues within peptides that are up to approximately 30 amino acids long. This Homo sapiens (Human) protein is Prolyl endopeptidase (PREP).